A 324-amino-acid chain; its full sequence is Quinolinate synthase (324 aa).

Iminosuccinate is bound by residues histidine 39 and serine 56. Cysteine 101 provides a ligand contact to [4Fe-4S] cluster. Iminosuccinate is bound by residues 127–129 and serine 144; that span reads YIN. A [4Fe-4S] cluster-binding site is contributed by cysteine 187. Iminosuccinate is bound by residues 213–215 and threonine 230; that span reads HPE. Position 280 (cysteine 280) interacts with [4Fe-4S] cluster.

Belongs to the quinolinate synthase family. Type 2 subfamily. [4Fe-4S] cluster is required as a cofactor.

It is found in the cytoplasm. It catalyses the reaction iminosuccinate + dihydroxyacetone phosphate = quinolinate + phosphate + 2 H2O + H(+). The protein operates within cofactor biosynthesis; NAD(+) biosynthesis; quinolinate from iminoaspartate: step 1/1. Catalyzes the condensation of iminoaspartate with dihydroxyacetone phosphate to form quinolinate. This chain is Quinolinate synthase, found in Nostoc sp. (strain PCC 7120 / SAG 25.82 / UTEX 2576).